The primary structure comprises 100 residues: uncharacterized protein (100 aa).

The first 17 residues, 1-17, serve as a signal peptide directing secretion; that stretch reads MTMKYFCSVMIAIALVG. Cys-18 carries N-palmitoyl cysteine lipidation. Residue Cys-18 is the site of S-diacylglycerol cysteine attachment.

It is found in the cell membrane. This is an uncharacterized protein from Salmonella paratyphi A (strain ATCC 9150 / SARB42).